We begin with the raw amino-acid sequence, 379 residues long: 23S rRNA (uracil(747)-C(5))-methyltransferase RlmC (379 aa).

[4Fe-4S] cluster-binding residues include C3, C11, C14, and C87. Residues Q212, F241, E262, and N309 each coordinate S-adenosyl-L-methionine. The active-site Nucleophile is the C336.

This sequence belongs to the class I-like SAM-binding methyltransferase superfamily. RNA M5U methyltransferase family. RlmC subfamily.

The catalysed reaction is uridine(747) in 23S rRNA + S-adenosyl-L-methionine = 5-methyluridine(747) in 23S rRNA + S-adenosyl-L-homocysteine + H(+). Its function is as follows. Catalyzes the formation of 5-methyl-uridine at position 747 (m5U747) in 23S rRNA. The sequence is that of 23S rRNA (uracil(747)-C(5))-methyltransferase RlmC from Shewanella loihica (strain ATCC BAA-1088 / PV-4).